The primary structure comprises 30 residues: Trypsin inhibitor 7 (30 aa).

Intrachain disulfides connect C4-C21, C11-C23, and C17-C29.

The protein belongs to the protease inhibitor I7 (squash-type serine protease inhibitor) family.

The protein localises to the secreted. Strongly inhibits trypsin, weakly inhibits chymotrypsin. In Cyclanthera pedata (Achocha), this protein is Trypsin inhibitor 7.